The following is a 624-amino-acid chain: Basal cell adhesion molecule (624 aa).

A signal peptide spans 1–25 (MEPPDARAGLLWLTLLLSGYSGAQA). 2 Ig-like V-type domains span residues 26-136 (ELHV…SSVR) and 141-251 (PEAT…HTFR). The Extracellular segment spans residues 26-543 (ELHVSVPPRV…GSVAPQTAQA (518 aa)). 3 cysteine pairs are disulfide-bonded: C47/C119, C166/C231, and C285/C331. Ig-like C2-type domains follow at residues 268-343 (PSTT…EEVQ), 357-436 (PLEL…QSFQ), and 443-534 (PELK…FHFG). N315, N371, and N378 each carry an N-linked (GlcNAc...) asparagine glycan. Cystine bridges form between C379–C419 and C468–C518. Residues 477 to 497 (KLTWSQRGDTTPAEPPFEGRG) are disordered. Residues 544–564 (GVAVMAVAVSVGLLLLVVAAF) traverse the membrane as a helical segment. Topologically, residues 565 to 624 (YCMRRKGRPGCCQRAEKGAPPAREPELSHSGSERPEHTGLLMGGPSGGGRGGNGGFGDEC) are cytoplasmic. Residues 574-624 (GCCQRAEKGAPPAREPELSHSGSERPEHTGLLMGGPSGGGRGGNGGFGDEC) are disordered. The segment covering 587–601 (REPELSHSGSERPEH) has biased composition (basic and acidic residues). 3 positions are modified to phosphoserine: S592, S594, and S596. Residues 605-624 (LMGGPSGGGRGGNGGFGDEC) show a composition bias toward gly residues.

In terms of assembly, homodimer. Interacts with ITGA4:ITGB1. Interacts with spectrins SPTA1 and SPTB1.

The protein resides in the cell membrane. Transmembrane glycoprotein that functions as both a receptor and an adhesion molecule playing a crucial role in cell adhesion, motility, migration and invasion. Extracellular domain enables binding to extracellular matrix proteins, such as laminin, integrin and other ligands while its intracellular domain interacts with cytoskeletal proteins like hemoglobin, facilitating cell signal transduction. Serves as a receptor for laminin alpha-5/LAMA5 to promote cell adhesion. Mechanistically, JAK2 induces BCAM phosphorylation and activates its adhesion to laminin by stimulating a Rap1/AKT signaling pathway in the absence of EPOR. This chain is Basal cell adhesion molecule (Bcam), found in Rattus norvegicus (Rat).